A 238-amino-acid polypeptide reads, in one-letter code: 3-dehydroquinate dehydratase (238 aa).

3-dehydroquinate-binding positions include 35-37 (ELR) and Arg70. His133 acts as the Proton donor/acceptor in catalysis. Lys160 functions as the Schiff-base intermediate with substrate in the catalytic mechanism. 2 residues coordinate 3-dehydroquinate: Arg202 and Gln225.

The protein belongs to the type-I 3-dehydroquinase family. As to quaternary structure, homodimer.

The enzyme catalyses 3-dehydroquinate = 3-dehydroshikimate + H2O. It participates in metabolic intermediate biosynthesis; chorismate biosynthesis; chorismate from D-erythrose 4-phosphate and phosphoenolpyruvate: step 3/7. Functionally, involved in the third step of the chorismate pathway, which leads to the biosynthesis of aromatic amino acids. Catalyzes the cis-dehydration of 3-dehydroquinate (DHQ) and introduces the first double bond of the aromatic ring to yield 3-dehydroshikimate. This is 3-dehydroquinate dehydratase from Staphylococcus aureus (strain USA300).